The following is a 208-amino-acid chain: MNNKFLFLVFLSFFNFFTYANSQEQVNSASTDLENESSLPIFEEDKANFVNNDSTQPVSIFNISDLLKIVLFLLIAFFIFFLLKKLIFYSKKSKYEQNSNLIKELVFYEIDVKNSIRIINILDNVYIFLVSSNSFTLLKEIKSEEELEDLKLRLSKINDSAKKDSFQSIFKKMLLKKEEIPSSGNDYVKLEEKIEASLKDKQDRLKKF.

In terms of biological role, required for flagella formation. This chain is Flagellar protein FliZ (fliZ), found in Borreliella burgdorferi (strain ATCC 35210 / DSM 4680 / CIP 102532 / B31) (Borrelia burgdorferi).